The following is a 529-amino-acid chain: uncharacterized protein (529 aa).

The region spanning 13-129 (QTAMRKMRAL…LSTLCQEAQR (117 aa)) is the Arf-GAP domain. A C4-type zinc finger spans residues 28–51 (CFDCGARNPTWCTVTYGVFLCIDC). The segment covering 291 to 301 (QMEAKVAKDPT) has biased composition (basic and acidic residues). Disordered stretches follow at residues 291–313 (QMEA…GMGG), 335–357 (VLTF…DDKY), 398–424 (KSRY…GASP), and 468–493 (FGSE…SDLK). The segment covering 399–420 (SRYTASSSSSSTSRAPTTRLTA) has biased composition (low complexity). The span at 476-487 (NGSQQRQSSQVP) shows a compositional bias: polar residues.

Its function is as follows. GTPase-activating protein for the ADP ribosylation factor family. This is an uncharacterized protein from Caenorhabditis elegans.